The primary structure comprises 216 residues: Adenylate kinase (216 aa).

10–15 lines the ATP pocket; sequence GAGKGT. The NMP stretch occupies residues 30 to 59; sequence STGDIFRANIKEKTPLGIEAKRYIDNGQLV. Residues Thr-31, Arg-36, 57 to 59, 85 to 88, and Gln-92 contribute to the AMP site; these read QLV and GFPR. The LID stretch occupies residues 126 to 163; it reads GRRVCTSCGASYHIRFNPPKIEGKCDICDNELIQRKDD. ATP is bound at residue Arg-127. Residues Cys-130 and Cys-133 each contribute to the Zn(2+) site. Position 136–137 (136–137) interacts with ATP; it reads SY. Zn(2+) is bound by residues Cys-150 and Cys-153. AMP contacts are provided by Arg-160 and Arg-171. Glu-199 is a binding site for ATP.

The protein belongs to the adenylate kinase family. Monomer.

Its subcellular location is the cytoplasm. It catalyses the reaction AMP + ATP = 2 ADP. Its pathway is purine metabolism; AMP biosynthesis via salvage pathway; AMP from ADP: step 1/1. In terms of biological role, catalyzes the reversible transfer of the terminal phosphate group between ATP and AMP. Plays an important role in cellular energy homeostasis and in adenine nucleotide metabolism. The protein is Adenylate kinase of Clostridium botulinum (strain Langeland / NCTC 10281 / Type F).